We begin with the raw amino-acid sequence, 197 residues long: Putative carbonic anhydrase YvdA (197 aa).

The Zn(2+) site is built by C41, D43, H99, and C102.

The protein belongs to the beta-class carbonic anhydrase family. Requires Zn(2+) as cofactor.

It carries out the reaction hydrogencarbonate + H(+) = CO2 + H2O. Functionally, reversible hydration of carbon dioxide. This Bacillus subtilis (strain 168) protein is Putative carbonic anhydrase YvdA (yvdA).